Consider the following 230-residue polypeptide: Heptaprenylglyceryl phosphate synthase (230 aa).

K12 is a sn-glycerol 1-phosphate binding site. 2 residues coordinate Mg(2+): D14 and T40. Sn-glycerol 1-phosphate-binding positions include 159–164 (YIEYSG), G189, and 209–210 (GD).

It belongs to the GGGP/HepGP synthase family. Group I subfamily. Homodimer. Requires Mg(2+) as cofactor.

It catalyses the reaction sn-glycerol 1-phosphate + all-trans-heptaprenyl diphosphate = 3-heptaprenyl-sn-glycero-1-phosphate + diphosphate. The protein operates within membrane lipid metabolism; glycerophospholipid metabolism. In terms of biological role, prenyltransferase that catalyzes in vivo the transfer of the heptaprenyl moiety of heptaprenyl pyrophosphate (HepPP; 35 carbon atoms) to the C3 hydroxyl of sn-glycerol-1-phosphate (G1P), producing heptaprenylglyceryl phosphate (HepGP). This reaction is an ether-bond-formation step in the biosynthesis of archaea-type G1P-based membrane lipids found in Bacillales. This is Heptaprenylglyceryl phosphate synthase from Staphylococcus aureus (strain JH1).